We begin with the raw amino-acid sequence, 399 residues long: Lipid droplet-regulating VLDL assembly factor AUP1 (399 aa).

Residues Met-1–Ser-21 lie on the Cytoplasmic side of the membrane. An intramembrane segment occupies Leu-22–Ile-42. Residues Gly-43–Gly-399 lie on the Cytoplasmic side of the membrane. One can recognise a CUE domain in the interval Thr-284–Val-326. The disordered stretch occupies residues Glu-332–Leu-364.

It belongs to the AUP1 family.

It localises to the endoplasmic reticulum membrane. The protein localises to the lipid droplet. Functionally, plays a role in the translocation of terminally misfolded proteins from the endoplasmic reticulum lumen to the cytoplasm and their degradation by the proteasome. Plays a role in lipid droplet formation. Induces lipid droplet clustering. In Xenopus laevis (African clawed frog), this protein is Lipid droplet-regulating VLDL assembly factor AUP1.